We begin with the raw amino-acid sequence, 455 residues long: Cysteinylglycine-S-conjugate dipeptidase (455 aa).

Residue His92 coordinates Zn(2+). Residue Asp94 is part of the active site. Asp125 lines the Zn(2+) pocket. The active-site Proton acceptor is Glu158. Zn(2+) contacts are provided by Glu159, Glu163, and His428.

It belongs to the peptidase M20F family. Requires Zn(2+) as cofactor.

The enzyme catalyses an S-substituted L-cysteinylglycine + H2O = an S-substituted L-cysteine + glycine. The catalysed reaction is S-(1-hydroxy-3-methylhexan-3-yl)-L-cysteinylglycine + H2O = S-(1-hydroxy-3-methylhexan-3-yl)-L-cysteine + glycine. It catalyses the reaction S-benzyl-L-cysteinylglycine + H2O = S-benzyl-L-cysteine + glycine. In terms of biological role, metallopeptidase that hydrolyzes the Cys-Gly bond of Cys-Gly-S-conjugates. Involved in the formation of the human body odorant 3-methyl-3-sulfanylhexan-1-ol (3M3SH) from odorless axilla secretions. Catalyzes the hydrolysis of the Cys-Gly bond of the Cys-Gly-S-conjugate of 3M3SH, a key precursor secreted by apocrine glands in human axilla skin. The Cys-S-conjugate obtained is then cleaved by the Cys-S-conjugate beta-lyase MetC, which finally releases 3M3SH. The protein is Cysteinylglycine-S-conjugate dipeptidase of Corynebacterium striatum.